The chain runs to 287 residues: MAEHFKQIIRCPVCLKDLEEAVQLKCGYACCLQCLNSLQKEPDGEGLLCRFCSVVSQKDDIKPKYKLRALVSIIKELEPKLKSVLTMNPRMRKFQVDMTFDVDTANNYLIISEDLRSFRSGDLSQNRKEQAERFDTALCVLGTPRFTSGRHYWEVDVGTSQVWDVGVCKESVNRQGKIELSSEHGFLTVGCREGKVFAASTVPMTPLWVSPQLHRVGIFLDVGMRSIAFYNVSDGCHINTFIEIPVCEPWRPFFAHKRGSQDDQSILSICSVINPSTASAPVSSEGK.

The RING-type; degenerate zinc finger occupies 11–53 (CPVCLKDLEEAVQLKCGYACCLQCLNSLQKEPDGEGLLCRFCS). The B30.2/SPRY domain maps to 78-276 (EPKLKSVLTM…LSICSVINPS (199 aa)).

The chain is Ret finger protein-like 4A-like protein 1 (RFPL4AL1) from Homo sapiens (Human).